A 348-amino-acid polypeptide reads, in one-letter code: UDP-N-acetyl-alpha-D-glucosaminouronate 4-epimerase (348 aa).

Residues Phe-26, Ile-27, Asp-46, Thr-50, Gly-51, Asp-77, Ile-78, Gln-97, Tyr-165, Lys-169, and Val-195 each contribute to the NAD(+) site. Tyr-165 acts as the Proton acceptor in catalysis.

It belongs to the NAD(P)-dependent epimerase/dehydratase family. Homodimer. NAD(+) is required as a cofactor.

The enzyme catalyses UDP-2-acetamido-2-deoxy-alpha-D-glucuronate = UDP-2-acetamido-2-deoxy-alpha-D-galacturonate. The catalysed reaction is UDP-N-acetyl-alpha-D-glucosamine = UDP-N-acetyl-alpha-D-galactosamine. It participates in capsule biogenesis; capsule polysaccharide biosynthesis. It functions in the pathway glycan metabolism; Vi-antigen biosynthesis. Epimerase required for the biosynthesis of the capsular polysaccharide, commonly referred as the Vi antigen, an important virulence factor. Catalyzes the reversible epimerization of UDP-N-acetylglucosaminuronic acid (UDP-GlcNAcA) to UDP-N-acetylgalactosaminuronic acid (UDP-GalNAcA). Also catalyzes, with lower efficiency, the reversible epimerization of UDP-N-acetylglucosamine (UDP-GlcNAc) to UDP-N-acetylgalactosamine (UDP-GalNAc). Cannot use UDP-glucose (UDP-Glc) and UDP-galactose (UDP-Gal) as substrates. This chain is UDP-N-acetyl-alpha-D-glucosaminouronate 4-epimerase, found in Salmonella typhi.